Here is a 76-residue protein sequence, read N- to C-terminus: Exodeoxyribonuclease 7 small subunit (76 aa).

The protein belongs to the XseB family. In terms of assembly, heterooligomer composed of large and small subunits.

It is found in the cytoplasm. It catalyses the reaction Exonucleolytic cleavage in either 5'- to 3'- or 3'- to 5'-direction to yield nucleoside 5'-phosphates.. Functionally, bidirectionally degrades single-stranded DNA into large acid-insoluble oligonucleotides, which are then degraded further into small acid-soluble oligonucleotides. In Arthrobacter sp. (strain FB24), this protein is Exodeoxyribonuclease 7 small subunit.